The chain runs to 716 residues: Fatty acid oxidation complex subunit alpha (716 aa).

The tract at residues 1-189 is enoyl-CoA hydratase/isomerase; the sequence is MIYQSPTIQV…KVGAVDAVVA (189 aa). Asp296 serves as a coordination point for substrate. The tract at residues 311–716 is 3-hydroxyacyl-CoA dehydrogenase; sequence KEVNNAAVLG…AANNGSYYQA (406 aa). NAD(+) is bound by residues Met324, Asp343, 400–402, Lys407, and Ser429; that span reads VVE. His450 serves as the catalytic For 3-hydroxyacyl-CoA dehydrogenase activity. Position 453 (Asn453) interacts with NAD(+). Positions 500 and 660 each coordinate substrate.

This sequence in the N-terminal section; belongs to the enoyl-CoA hydratase/isomerase family. It in the C-terminal section; belongs to the 3-hydroxyacyl-CoA dehydrogenase family. As to quaternary structure, heterotetramer of two alpha chains (FadB) and two beta chains (FadA).

The catalysed reaction is a (3S)-3-hydroxyacyl-CoA + NAD(+) = a 3-oxoacyl-CoA + NADH + H(+). It catalyses the reaction a (3S)-3-hydroxyacyl-CoA = a (2E)-enoyl-CoA + H2O. The enzyme catalyses a 4-saturated-(3S)-3-hydroxyacyl-CoA = a (3E)-enoyl-CoA + H2O. It carries out the reaction (3S)-3-hydroxybutanoyl-CoA = (3R)-3-hydroxybutanoyl-CoA. The catalysed reaction is a (3Z)-enoyl-CoA = a 4-saturated (2E)-enoyl-CoA. It catalyses the reaction a (3E)-enoyl-CoA = a 4-saturated (2E)-enoyl-CoA. Its pathway is lipid metabolism; fatty acid beta-oxidation. Functionally, involved in the aerobic and anaerobic degradation of long-chain fatty acids via beta-oxidation cycle. Catalyzes the formation of 3-oxoacyl-CoA from enoyl-CoA via L-3-hydroxyacyl-CoA. It can also use D-3-hydroxyacyl-CoA and cis-3-enoyl-CoA as substrate. This is Fatty acid oxidation complex subunit alpha from Shewanella baltica (strain OS195).